The primary structure comprises 928 residues: Chromatin structure-remodeling complex subunit RSC1 (928 aa).

2 Bromo domains span residues Gln-4 to Asn-112 and Arg-240 to Glu-342. Residues Glu-368–Arg-486 form the BAH domain. 4 disordered regions span residues Asp-558 to Asp-586, Thr-598 to Leu-635, His-657 to Ser-701, and Ile-871 to Ala-908. Over residues Ser-600–Lys-620 the composition is skewed to polar residues. Low complexity predominate over residues Ser-621–Ser-631. Residues Lys-667–Arg-679 are compositionally biased toward polar residues. The residue at position 670 (Ser-670) is a Phosphoserine. Positions Ser-692–Ser-701 are enriched in low complexity. The segment covering Thr-883 to Asp-902 has biased composition (acidic residues).

Belongs to the RSC1 family. In terms of assembly, component of the two forms of the RSC complex composed of at least either RSC1 or RSC2, and ARP7, ARP9, LDB7, NPL6, RSC3, RSC30, RSC4, RSC58, RSC6, RSC8, RSC9, SFH1, STH1, HTL1 and probably RTT102. The complexes interact with histone and histone variant components of centromeric chromatin.

Its subcellular location is the nucleus. Functionally, component of the chromatin structure remodeling complex (RSC), which is involved in transcription regulation and nucleosome positioning. RSC is responsible for the transfer of a histone octamer from a nucleosome core particle to naked DNA. The reaction requires ATP and involves an activated RSC-nucleosome intermediate. Remodeling reaction also involves DNA translocation, DNA twist and conformational change. As a reconfigurer of centromeric and flanking nucleosomes, RSC complex is required both for proper kinetochore function in chromosome segregation and, via a PKC1-dependent signaling pathway, for organization of the cellular cytoskeleton. This subunit is involved in meiotic sporulation through regulating IME2 expression. This Saccharomyces cerevisiae (strain ATCC 204508 / S288c) (Baker's yeast) protein is Chromatin structure-remodeling complex subunit RSC1 (RSC1).